Consider the following 87-residue polypeptide: UPF0367 protein P9303_26451 (87 aa).

This sequence belongs to the UPF0367 family.

This chain is UPF0367 protein P9303_26451, found in Prochlorococcus marinus (strain MIT 9303).